We begin with the raw amino-acid sequence, 63 residues long: Large ribosomal subunit protein uL29 (63 aa).

It belongs to the universal ribosomal protein uL29 family.

This chain is Large ribosomal subunit protein uL29, found in Baumannia cicadellinicola subsp. Homalodisca coagulata.